The following is a 308-amino-acid chain: Methionyl-tRNA formyltransferase (308 aa).

Residue 109–112 (SLLP) participates in (6S)-5,6,7,8-tetrahydrofolate binding.

It belongs to the Fmt family.

The catalysed reaction is L-methionyl-tRNA(fMet) + (6R)-10-formyltetrahydrofolate = N-formyl-L-methionyl-tRNA(fMet) + (6S)-5,6,7,8-tetrahydrofolate + H(+). Functionally, attaches a formyl group to the free amino group of methionyl-tRNA(fMet). The formyl group appears to play a dual role in the initiator identity of N-formylmethionyl-tRNA by promoting its recognition by IF2 and preventing the misappropriation of this tRNA by the elongation apparatus. In Phenylobacterium zucineum (strain HLK1), this protein is Methionyl-tRNA formyltransferase.